The chain runs to 318 residues: Ribonuclease Z (318 aa).

Residues His-62, His-64, Asp-66, His-67, His-139, Asp-210, and His-268 each coordinate Zn(2+). The active-site Proton acceptor is Asp-66.

The protein belongs to the RNase Z family. Homodimer. Zn(2+) is required as a cofactor.

It catalyses the reaction Endonucleolytic cleavage of RNA, removing extra 3' nucleotides from tRNA precursor, generating 3' termini of tRNAs. A 3'-hydroxy group is left at the tRNA terminus and a 5'-phosphoryl group is left at the trailer molecule.. Its function is as follows. Zinc phosphodiesterase, which displays some tRNA 3'-processing endonuclease activity. Probably involved in tRNA maturation, by removing a 3'-trailer from precursor tRNA. The polypeptide is Ribonuclease Z (Gloeothece citriformis (strain PCC 7424) (Cyanothece sp. (strain PCC 7424))).